Consider the following 256-residue polypeptide: Trypsin epsilon (256 aa).

The N-terminal stretch at 1–22 is a signal peptide; sequence MLKIAVLLSVLACALAGTIPDG. Positions 23 to 30 are cleaved as a propeptide — activation peptide; the sequence is LLPQLDGR. The Peptidase S1 domain maps to 31–254; sequence IVGGYETSID…FHEWIERTAR (224 aa). The cysteines at positions 56 and 72 are disulfide-linked. Catalysis depends on charge relay system residues histidine 71 and aspartate 116. Cystine bridges form between cysteine 180-cysteine 197 and cysteine 206-cysteine 230. Serine 210 serves as the catalytic Charge relay system.

This sequence belongs to the peptidase S1 family.

Its subcellular location is the secreted. It localises to the extracellular space. The catalysed reaction is Preferential cleavage: Arg-|-Xaa, Lys-|-Xaa.. The sequence is that of Trypsin epsilon (epsilonTry) from Drosophila erecta (Fruit fly).